Consider the following 184-residue polypeptide: Calmodulin-related protein (184 aa).

EF-hand domains follow at residues 8-43 (DQIS…LGQN), 44-79 (PTEA…KMKD), 81-116 (DSEE…LGEK), and 117-152 (LTDE…NRRR). Ca(2+) is bound by residues aspartate 21, aspartate 23, aspartate 25, cysteine 27, glutamate 32, aspartate 57, aspartate 59, asparagine 61, threonine 63, glutamate 68, aspartate 94, aspartate 96, asparagine 98, and glutamate 105. At lysine 116 the chain carries N6,N6,N6-trimethyllysine. Ca(2+) is bound by residues aspartate 130, aspartate 132, aspartate 134, glutamine 136, and glutamate 141. The disordered stretch occupies residues 156–184 (EESKRSVNSNISRSNNGRKVRKRDRCTIL). Positions 161 to 170 (SVNSNISRSN) are enriched in low complexity. The span at 171-184 (NGRKVRKRDRCTIL) shows a compositional bias: basic residues.

The protein belongs to the calmodulin family.

In terms of biological role, calmodulin mediates the control of a large number of enzymes, ion channels and other proteins by Ca(2+). Among the enzymes to be stimulated by the calmodulin-Ca(2+) complex are a number of protein kinases and phosphatases. The protein is Calmodulin-related protein (CAM53) of Petunia hybrida (Petunia).